A 361-amino-acid chain; its full sequence is UDP-N-acetylglucosamine--N-acetylmuramyl-(pentapeptide) pyrophosphoryl-undecaprenol N-acetylglucosamine transferase (361 aa).

Residues 11–13, N124, R162, S193, and Q292 contribute to the UDP-N-acetyl-alpha-D-glucosamine site; that span reads TGG.

This sequence belongs to the glycosyltransferase 28 family. MurG subfamily.

It localises to the cell inner membrane. The catalysed reaction is di-trans,octa-cis-undecaprenyl diphospho-N-acetyl-alpha-D-muramoyl-L-alanyl-D-glutamyl-meso-2,6-diaminopimeloyl-D-alanyl-D-alanine + UDP-N-acetyl-alpha-D-glucosamine = di-trans,octa-cis-undecaprenyl diphospho-[N-acetyl-alpha-D-glucosaminyl-(1-&gt;4)]-N-acetyl-alpha-D-muramoyl-L-alanyl-D-glutamyl-meso-2,6-diaminopimeloyl-D-alanyl-D-alanine + UDP + H(+). The protein operates within cell wall biogenesis; peptidoglycan biosynthesis. Its function is as follows. Cell wall formation. Catalyzes the transfer of a GlcNAc subunit on undecaprenyl-pyrophosphoryl-MurNAc-pentapeptide (lipid intermediate I) to form undecaprenyl-pyrophosphoryl-MurNAc-(pentapeptide)GlcNAc (lipid intermediate II). The sequence is that of UDP-N-acetylglucosamine--N-acetylmuramyl-(pentapeptide) pyrophosphoryl-undecaprenol N-acetylglucosamine transferase from Elusimicrobium minutum (strain Pei191).